A 238-amino-acid chain; its full sequence is 2-C-methyl-D-erythritol 4-phosphate cytidylyltransferase (238 aa).

This sequence belongs to the IspD/TarI cytidylyltransferase family. IspD subfamily.

It carries out the reaction 2-C-methyl-D-erythritol 4-phosphate + CTP + H(+) = 4-CDP-2-C-methyl-D-erythritol + diphosphate. The protein operates within isoprenoid biosynthesis; isopentenyl diphosphate biosynthesis via DXP pathway; isopentenyl diphosphate from 1-deoxy-D-xylulose 5-phosphate: step 2/6. Functionally, catalyzes the formation of 4-diphosphocytidyl-2-C-methyl-D-erythritol from CTP and 2-C-methyl-D-erythritol 4-phosphate (MEP). The protein is 2-C-methyl-D-erythritol 4-phosphate cytidylyltransferase of Acinetobacter baumannii (strain AYE).